A 157-amino-acid chain; its full sequence is Ribosome maturation factor RimP (157 aa).

This sequence belongs to the RimP family.

The protein localises to the cytoplasm. In terms of biological role, required for maturation of 30S ribosomal subunits. This Synechococcus sp. (strain CC9311) protein is Ribosome maturation factor RimP.